Consider the following 360-residue polypeptide: Peptide chain release factor 1 (360 aa).

An N5-methylglutamine modification is found at Q235. Basic and acidic residues predominate over residues 285 to 295 (RQAAEQADTRR). Residues 285 to 309 (RQAAEQADTRRNLLGSGDRSDKIRT) are disordered.

The protein belongs to the prokaryotic/mitochondrial release factor family. Methylated by PrmC. Methylation increases the termination efficiency of RF1.

Its subcellular location is the cytoplasm. Its function is as follows. Peptide chain release factor 1 directs the termination of translation in response to the peptide chain termination codons UAG and UAA. This chain is Peptide chain release factor 1, found in Actinobacillus pleuropneumoniae serotype 7 (strain AP76).